Consider the following 78-residue polypeptide: Small ribosomal subunit protein uS17 (78 aa).

Belongs to the universal ribosomal protein uS17 family. Part of the 30S ribosomal subunit.

In terms of biological role, one of the primary rRNA binding proteins, it binds specifically to the 5'-end of 16S ribosomal RNA. The sequence is that of Small ribosomal subunit protein uS17 from Allorhizobium ampelinum (strain ATCC BAA-846 / DSM 112012 / S4) (Agrobacterium vitis (strain S4)).